A 402-amino-acid polypeptide reads, in one-letter code: Argininosuccinate synthase (402 aa).

ATP is bound by residues 13–21 (AYSGGLDTS) and Ala40. L-citrulline contacts are provided by Tyr91 and Ser96. Gly121 contributes to the ATP binding site. Positions 123, 127, and 128 each coordinate L-aspartate. Asn127 contributes to the L-citrulline binding site. Arg131, Ser180, Ser189, Glu265, and Tyr277 together coordinate L-citrulline.

Belongs to the argininosuccinate synthase family. Type 1 subfamily. As to quaternary structure, homotetramer.

The protein localises to the cytoplasm. It catalyses the reaction L-citrulline + L-aspartate + ATP = 2-(N(omega)-L-arginino)succinate + AMP + diphosphate + H(+). Its pathway is amino-acid biosynthesis; L-arginine biosynthesis; L-arginine from L-ornithine and carbamoyl phosphate: step 2/3. The protein is Argininosuccinate synthase of Leptospira biflexa serovar Patoc (strain Patoc 1 / Ames).